The following is a 372-amino-acid chain: Glutamate 5-kinase (372 aa).

Lysine 14 serves as a coordination point for ATP. Residues serine 54, aspartate 141, and asparagine 153 each contribute to the substrate site. 173–174 (TD) serves as a coordination point for ATP. Positions 280–358 (RGRVVIDGGA…SEIESVLGHL (79 aa)) constitute a PUA domain.

Belongs to the glutamate 5-kinase family.

The protein resides in the cytoplasm. The catalysed reaction is L-glutamate + ATP = L-glutamyl 5-phosphate + ADP. It participates in amino-acid biosynthesis; L-proline biosynthesis; L-glutamate 5-semialdehyde from L-glutamate: step 1/2. Catalyzes the transfer of a phosphate group to glutamate to form L-glutamate 5-phosphate. The protein is Glutamate 5-kinase of Cupriavidus taiwanensis (strain DSM 17343 / BCRC 17206 / CCUG 44338 / CIP 107171 / LMG 19424 / R1) (Ralstonia taiwanensis (strain LMG 19424)).